A 47-amino-acid polypeptide reads, in one-letter code: Delta-actitoxin-Ael1a (47 aa).

3 disulfides stabilise this stretch: Cys4–Cys44, Cys6–Cys34, and Cys27–Cys45.

Belongs to the sea anemone sodium channel inhibitory toxin family. Type I subfamily. As to expression, expressed in ectodermal glands. Not expressed in nematocytes.

Its subcellular location is the secreted. In terms of biological role, binds specifically to voltage-gated sodium channels (Nav), thereby delaying their inactivation during signal transduction. It strongly stimulates mammalian cardiac muscle contraction. Paralyzes the shore crab (C.maenas) by tetanic contractions after intramuscular injection. The polypeptide is Delta-actitoxin-Ael1a (Anthopleura elegantissima (Green aggregating anemone)).